We begin with the raw amino-acid sequence, 114 residues long: MYAIIKTGGKQYRVQEGDIIDVELLNTDPGAQVEFGEVLFAFDGAKTQIGKPGIPNFLVYGEVVGTVKGEKVTSLKYKPSHNQCRKWGHRQHYTRVKITGIGSKRKGKEGNHGS.

It belongs to the bacterial ribosomal protein bL21 family. In terms of assembly, part of the 50S ribosomal subunit. Contacts protein L20.

Its function is as follows. This protein binds to 23S rRNA in the presence of protein L20. This is Large ribosomal subunit protein bL21 from Protochlamydia amoebophila (strain UWE25).